Reading from the N-terminus, the 312-residue chain is Dehydrin CAS31 (312 aa).

2 disordered regions span residues 1–88 (MSQY…HTGG) and 248–287 (GTEQ…HHGE). Positions 21 to 30 (PLTSQGQVDQ) are enriched in polar residues. Residues 35–46 (ISGGGMTGATGH) are compositionally biased toward gly residues. Over residues 55-66 (HGVGVDQTTGFG) the composition is skewed to low complexity. Gly residues-rich tracts occupy residues 67 to 88 (SNTG…HTGG) and 256 to 278 (TGTG…GTTG).

Belongs to the plant dehydrin family. As to quaternary structure, interacts with the leghemoglobin LB120-1 in the cytoplasm; this interaction leads to LB120-1 protection from denaturation under thermal and drought stresses. As to expression, expressed in nodules and roots.

It is found in the cytoplasm. Functionally, intrinsically disordered protein acting as a chaperone. Ensures leghemoglobins (e.g. LB120-1) protection from denaturation under thermal and drought stresses to delay root nodule nitrogenase inactivation and subsequent nodule senescence, thus supporting symbiotic nitrogen fixation (SNF). The sequence is that of Dehydrin CAS31 from Medicago truncatula (Barrel medic).